Here is a 1259-residue protein sequence, read N- to C-terminus: Translocation and assembly module subunit TamB (1259 aa).

The residue at position 1 (methionine 1) is an N-formylmethionine. Residues 1-6 (MSLWKK) are Cytoplasmic-facing. The chain crosses the membrane as a helical; Signal-anchor for type II membrane protein span at residues 7–27 (ISLGVVIVILLLLGSVAFLVG). The Periplasmic portion of the chain corresponds to 28–1259 (TTSGLHLVFK…ALDLLYQFEF (1232 aa)).

It belongs to the TamB family. In terms of assembly, interacts with TamA to form the translocation and assembly module (TAM).

It is found in the cell inner membrane. Its function is as follows. Component of the translocation and assembly module (TAM), which facilitates the insertion and assembly of specific beta-barrel proteins into the outer membrane. Promotes the assembly and secretion across the outer membrane of a subset of autotransporters, such as Ag43. Involved in the assembly of the outer membrane usher protein FimD. In vitro, when TAM is reconstituted into preformed liposomes, it can promote the assembly of several outer membrane proteins, including OmpA, EspP, Ag43 and FadL. TamA is sufficient to catalyze a low level of outer membrane protein (OMP) assembly, but both TamA and TamB are required for efficient OMP assembly. TamB may regulate TamA activity. It could regulate conformational changes in TamA to drive its function in OMP assembly. It could also act as a chaperone that facilitate the transport of nascent membrane proteins across the periplasm to TamA in the outer membrane. In addition, is involved in outer membrane lipid homeostasis. Likely transports phospholipids between the inner membrane and the outer membrane. It would provide a bridge-like structure that protects phospholipids as they travel across the periplasm. One possible explanation for the apparent dual function of TAM is that TamB is a somewhat generic transporter of hydrophobic molecules. In terms of biological role, tamB, YdbH and YhdP are redundant, but not equivalent, in performing an essential function for growth and maintaining lipid homeostasis in the outer membrane. The transport functions of TamB and YhdP could be differentiated according to the fatty acid saturation state of the phospholipids, with TamB transporting more unsaturated phospholipids and YhdP more saturated phospholipids. Any of these three proteins is sufficient for growth. This is Translocation and assembly module subunit TamB from Escherichia coli (strain K12).